The chain runs to 348 residues: MVKSQLILGIESSCDETGVALVRAPADGSVPTLLAHALHSQIDMHQAYGGVVPELASRDHIRRVLPLTGTVLAEADCRLAEVDVVAYTRGPGLAGALLVGAGVACALGASLDRPVLGVHHLEGHLLSPFLSADPPEFPFVALLVSGGHTQLMRVDGVGRYELLGETIDDAAGEAFDKSAKLLGLGYPGGPALSRLAEQGDAAAFKLPRPLLHSGNLDFSFAGLKTAVLTQAKKLGDELPARKADLAASTQAAIVDVLVKKTLAALQASGLRRVVVAGGVGANRLLRAQLDAACARMGVRVHYPELHLCTDNGAMIAMAAAMRLQAGREAPNREYAFDVKPRWPLDALA.

Fe cation is bound by residues H120 and H124. Substrate contacts are provided by residues 143 to 147 (LVSGG), D176, G189, and N282. D310 serves as a coordination point for Fe cation.

It belongs to the KAE1 / TsaD family. It depends on Fe(2+) as a cofactor.

The protein resides in the cytoplasm. The enzyme catalyses L-threonylcarbamoyladenylate + adenosine(37) in tRNA = N(6)-L-threonylcarbamoyladenosine(37) in tRNA + AMP + H(+). Required for the formation of a threonylcarbamoyl group on adenosine at position 37 (t(6)A37) in tRNAs that read codons beginning with adenine. Is involved in the transfer of the threonylcarbamoyl moiety of threonylcarbamoyl-AMP (TC-AMP) to the N6 group of A37, together with TsaE and TsaB. TsaD likely plays a direct catalytic role in this reaction. The protein is tRNA N6-adenosine threonylcarbamoyltransferase of Paracidovorax citrulli (strain AAC00-1) (Acidovorax citrulli).